Here is a 90-residue protein sequence, read N- to C-terminus: Small ribosomal subunit protein uS15 (90 aa).

It belongs to the universal ribosomal protein uS15 family. Part of the 30S ribosomal subunit. Forms a bridge to the 50S subunit in the 70S ribosome, contacting the 23S rRNA.

Functionally, one of the primary rRNA binding proteins, it binds directly to 16S rRNA where it helps nucleate assembly of the platform of the 30S subunit by binding and bridging several RNA helices of the 16S rRNA. In terms of biological role, forms an intersubunit bridge (bridge B4) with the 23S rRNA of the 50S subunit in the ribosome. The chain is Small ribosomal subunit protein uS15 from Campylobacter jejuni subsp. doylei (strain ATCC BAA-1458 / RM4099 / 269.97).